The primary structure comprises 162 residues: MSNCFFDVIANGQPLGRIVFKLFDDVVPKTAANFRALCTGEKGYGYAGSTFHRVIPQFMLQGGDFTRGNGTGGKSIYGEKFPDENFALKHNKPGLLSMANAGPNTNGSQFFITTVVTPWLDGKHVVFGEVTEGMDVVKKVESLGSNSGATRARIVIDKCGTV.

A PPIase cyclophilin-type domain is found at 5 to 161 (FFDVIANGQP…ARIVIDKCGT (157 aa)).

This sequence belongs to the cyclophilin-type PPIase family. PPIase A subfamily.

It localises to the cytoplasm. It carries out the reaction [protein]-peptidylproline (omega=180) = [protein]-peptidylproline (omega=0). Binds cyclosporin A (CsA). CsA mediates some of its effects via an inhibitory action on PPIase. Functionally, PPIases accelerate the folding of proteins. It catalyzes the cis-trans isomerization of proline imidic peptide bonds in oligopeptides. In Schizosaccharomyces pombe (strain 972 / ATCC 24843) (Fission yeast), this protein is Peptidyl-prolyl cis-trans isomerase (ppi1).